Reading from the N-terminus, the 672-residue chain is SHC SH2 domain-binding protein 1 (672 aa).

N-acetylalanine is present on A2. S5 is subject to Phosphoserine. At T7 the chain carries Phosphothreonine. Residues S31, S42, S44, S47, and S273 each carry the phosphoserine modification. PbH1 repeat units follow at residues 428-451 (GADIKISGIKFVQHDAVEGILIVH), 452-473 (RGKTTLENCVLQCETTGVTVRT), 474-496 (SAEFLMKNSDLYGAKGAGIEIYP), 497-518 (GSQCTLSDNGIHHCKEGILIKD), and 526-548 (IPKISMVNNIIHNNEGYGVVLVK). S634 is subject to Phosphoserine.

In terms of assembly, interacts directly with isoform p52shc of SHC1 via its SH2 domain. Interacts with TRIM71; leading to enhanced SHCBP1 protein stability. Interacts with both members of the centralspindlin complex, KIF23 and RACGAP1.

It localises to the midbody. The protein localises to the cytoplasm. It is found in the cytoskeleton. The protein resides in the spindle. Functionally, may play a role in signaling pathways governing cellular proliferation, cell growth and differentiation. May be a component of a novel signaling pathway downstream of Shc. Acts as a positive regulator of FGF signaling in neural progenitor cells. This Homo sapiens (Human) protein is SHC SH2 domain-binding protein 1 (SHCBP1).